A 228-amino-acid polypeptide reads, in one-letter code: Protein ARV 2 (228 aa).

2 helical membrane-spanning segments follow: residues E37–H57 and L80–R100. N107 carries an N-linked (GlcNAc...) asparagine glycan. 3 helical membrane passes run V123–V143, I150–W170, and V176–T196.

It belongs to the ARV1 family. Restricted to tissues in which cells are actively dividing or expanding. Mostly expressed in roots and flowers, and, to a lower extent, in stems and leaves.

It localises to the endoplasmic reticulum membrane. Functionally, mediator of sterol homeostasis involved in sterol uptake, trafficking and distribution into membranes. Also regulates the sphingolipid metabolism. This is Protein ARV 2 from Arabidopsis thaliana (Mouse-ear cress).